Consider the following 201-residue polypeptide: Large ribosomal subunit protein uL4 (201 aa).

The tract at residues 45 to 66 (AQKSRAEVVGSNKKPWRQKGTG) is disordered.

Belongs to the universal ribosomal protein uL4 family. In terms of assembly, part of the 50S ribosomal subunit.

Functionally, one of the primary rRNA binding proteins, this protein initially binds near the 5'-end of the 23S rRNA. It is important during the early stages of 50S assembly. It makes multiple contacts with different domains of the 23S rRNA in the assembled 50S subunit and ribosome. Its function is as follows. Forms part of the polypeptide exit tunnel. The polypeptide is Large ribosomal subunit protein uL4 (Baumannia cicadellinicola subsp. Homalodisca coagulata).